We begin with the raw amino-acid sequence, 355 residues long: Uroporphyrinogen decarboxylase (355 aa).

Substrate-binding positions include 27–31 (RQAGR), aspartate 78, tyrosine 155, serine 210, and histidine 328.

Belongs to the uroporphyrinogen decarboxylase family. In terms of assembly, homodimer.

It is found in the cytoplasm. The enzyme catalyses uroporphyrinogen III + 4 H(+) = coproporphyrinogen III + 4 CO2. Its pathway is porphyrin-containing compound metabolism; protoporphyrin-IX biosynthesis; coproporphyrinogen-III from 5-aminolevulinate: step 4/4. Functionally, catalyzes the decarboxylation of four acetate groups of uroporphyrinogen-III to yield coproporphyrinogen-III. The protein is Uroporphyrinogen decarboxylase of Pseudomonas fluorescens (strain ATCC BAA-477 / NRRL B-23932 / Pf-5).